The following is a 117-amino-acid chain: Large ribosomal subunit protein uL18 (117 aa).

The protein belongs to the universal ribosomal protein uL18 family. Part of the 50S ribosomal subunit; part of the 5S rRNA/L5/L18/L25 subcomplex. Contacts the 5S and 23S rRNAs.

Its function is as follows. This is one of the proteins that bind and probably mediate the attachment of the 5S RNA into the large ribosomal subunit, where it forms part of the central protuberance. In Sodalis glossinidius (strain morsitans), this protein is Large ribosomal subunit protein uL18.